A 311-amino-acid chain; its full sequence is Ribonuclease HIII (311 aa).

The region spanning 95–311 is the RNase H type-2 domain; it reads MSIVGSDEVG…NTEKAFRLLK (217 aa). Positions 101, 102, and 206 each coordinate a divalent metal cation.

The protein belongs to the RNase HII family. RnhC subfamily. Requires Mn(2+) as cofactor. The cofactor is Mg(2+).

Its subcellular location is the cytoplasm. It carries out the reaction Endonucleolytic cleavage to 5'-phosphomonoester.. Endonuclease that specifically degrades the RNA of RNA-DNA hybrids. This is Ribonuclease HIII from Bacillus cereus (strain ATCC 10987 / NRS 248).